We begin with the raw amino-acid sequence, 405 residues long: Cysteine desulfurase IscS (405 aa).

Pyridoxal 5'-phosphate-binding positions include 75-76 (AT), asparagine 156, glutamine 184, and 204-206 (SAH). The residue at position 207 (lysine 207) is an N6-(pyridoxal phosphate)lysine. Residue threonine 244 participates in pyridoxal 5'-phosphate binding. Cysteine 329 acts as the Cysteine persulfide intermediate in catalysis. Cysteine 329 is a binding site for [2Fe-2S] cluster.

Belongs to the class-V pyridoxal-phosphate-dependent aminotransferase family. NifS/IscS subfamily. Homodimer. Forms a heterotetramer with IscU, interacts with other sulfur acceptors. The cofactor is pyridoxal 5'-phosphate.

It is found in the cytoplasm. The catalysed reaction is (sulfur carrier)-H + L-cysteine = (sulfur carrier)-SH + L-alanine. It functions in the pathway cofactor biosynthesis; iron-sulfur cluster biosynthesis. Functionally, master enzyme that delivers sulfur to a number of partners involved in Fe-S cluster assembly, tRNA modification or cofactor biosynthesis. Catalyzes the removal of elemental sulfur atoms from cysteine to produce alanine. Functions as a sulfur delivery protein for Fe-S cluster synthesis onto IscU, an Fe-S scaffold assembly protein, as well as other S acceptor proteins. The sequence is that of Cysteine desulfurase IscS from Acinetobacter baumannii (strain SDF).